The sequence spans 176 residues: NAD(P)H-quinone oxidoreductase subunit 6, chloroplastic (176 aa).

5 consecutive transmembrane segments (helical) span residues 10-30 (FLLVFLGSGLILGGLGVVLLP), 32-52 (PIYSAFSLGLVLVCTSLFYIL), 61-81 (AQLLIYVGAINVLIIFAVMFM), 92-112 (LWTVGNGITSMVCISLFISLI), and 152-172 (FFLPFELISIILLVALIGAIA).

It belongs to the complex I subunit 6 family. As to quaternary structure, NDH is composed of at least 16 different subunits, 5 of which are encoded in the nucleus.

The protein localises to the plastid. It is found in the chloroplast thylakoid membrane. The catalysed reaction is a plastoquinone + NADH + (n+1) H(+)(in) = a plastoquinol + NAD(+) + n H(+)(out). It catalyses the reaction a plastoquinone + NADPH + (n+1) H(+)(in) = a plastoquinol + NADP(+) + n H(+)(out). NDH shuttles electrons from NAD(P)H:plastoquinone, via FMN and iron-sulfur (Fe-S) centers, to quinones in the photosynthetic chain and possibly in a chloroplast respiratory chain. The immediate electron acceptor for the enzyme in this species is believed to be plastoquinone. Couples the redox reaction to proton translocation, and thus conserves the redox energy in a proton gradient. This is NAD(P)H-quinone oxidoreductase subunit 6, chloroplastic (ndhG) from Solanum bulbocastanum (Wild potato).